We begin with the raw amino-acid sequence, 557 residues long: Potassium-transporting ATPase potassium-binding subunit (557 aa).

The next 12 helical transmembrane spans lie at 5–25, 63–83, 132–152, 170–190, 253–273, 283–303, 329–349, 356–376, 379–399, 416–436, 484–504, and 526–546; these read GFLLIATFLLVLMVLARPLGS, LCAILGLNMLGLAVLFFMLLG, GLTVQNFLSAASGIAVIFALI, LLRITLWVLAPVALLIALFFI, FVQMLAIFLIPTALCFAFGEV, LLWAMSVIFVICVGVVMWAEV, VLVSSLFAVVTTAASCGAVIA, ALGGMVPMWLMQIGEVVFGGV, GLYGMMLFVLLAVFIAGLMIG, LTALAILVTPTLVLMGAALAM, LLALCMFVGRFGVIIPVMAIA, and LFVGLLIGTVLLVGALTFIPA.

Belongs to the KdpA family. The system is composed of three essential subunits: KdpA, KdpB and KdpC.

It is found in the cell inner membrane. Part of the high-affinity ATP-driven potassium transport (or Kdp) system, which catalyzes the hydrolysis of ATP coupled with the electrogenic transport of potassium into the cytoplasm. This subunit binds the periplasmic potassium ions and delivers the ions to the membrane domain of KdpB through an intramembrane tunnel. This chain is Potassium-transporting ATPase potassium-binding subunit, found in Escherichia coli O81 (strain ED1a).